A 300-amino-acid chain; its full sequence is Ribosomal protein bS6--L-glutamate ligase (300 aa).

Residues 104–287 (MQLLARQGID…IAGKMIRWIE (184 aa)) form the ATP-grasp domain. Residues K141, 178 to 179 (EY), D187, and 211 to 213 (RSN) each bind ATP. 3 residues coordinate Mg(2+): D248, E260, and N262. 3 residues coordinate Mn(2+): D248, E260, and N262.

It belongs to the RimK family. It depends on Mg(2+) as a cofactor. Mn(2+) is required as a cofactor.

Functionally, an L-glutamate ligase that catalyzes the ATP-dependent post-translational addition of glutamate residues to the C-terminus of ribosomal protein bS6 (RpsF). Is also able to catalyze the synthesis of poly-alpha-glutamate in vitro, via ATP hydrolysis from unprotected glutamate as substrate. The number of glutamate residues added to either RpsF or to poly-alpha-glutamate changes with pH. This chain is Ribosomal protein bS6--L-glutamate ligase, found in Escherichia coli O7:K1 (strain IAI39 / ExPEC).